The sequence spans 418 residues: Histidine--tRNA ligase (418 aa).

Belongs to the class-II aminoacyl-tRNA synthetase family. As to quaternary structure, homodimer.

The protein resides in the cytoplasm. The enzyme catalyses tRNA(His) + L-histidine + ATP = L-histidyl-tRNA(His) + AMP + diphosphate + H(+). The protein is Histidine--tRNA ligase of Dehalococcoides mccartyi (strain ATCC BAA-2266 / KCTC 15142 / 195) (Dehalococcoides ethenogenes (strain 195)).